A 221-amino-acid polypeptide reads, in one-letter code: Glutathione S-transferase Z1 (221 aa).

One can recognise a GST N-terminal domain in the interval Glu7–Pro88. Residues Ser17 to Ser18, Ser17 to Arg22, Gln46, Gln46 to Phe47, Thr59 to Val60, Val60, Asp72 to Ser73, Gln112, and Asn116 to Ala118 each bind glutathione. One can recognise a GST C-terminal domain in the interval Asp93–Ser218.

It belongs to the GST superfamily. Zeta family. In terms of assembly, homodimer.

Its subcellular location is the cytoplasm. It is found in the cytosol. The catalysed reaction is RX + glutathione = an S-substituted glutathione + a halide anion + H(+). Its function is as follows. Acts a maleylacetone isomerase. Also catalyzes the glutathione-dependent dehalogenation of dichloroacetic acid to glyoxylic acid. In vitro, possesses glutathione peroxidase activity toward cumene hydroperoxide and linoleic acid-13-hydroperoxide. The sequence is that of Glutathione S-transferase Z1 (GSTZ1) from Arabidopsis thaliana (Mouse-ear cress).